A 230-amino-acid polypeptide reads, in one-letter code: Cytochrome c oxidase subunit 2 (230 aa).

At 1–14 the chain is on the mitochondrial intermembrane side; that stretch reads MAHPSQLGFQDAAS. Residues 15–45 traverse the membrane as a helical segment; the sequence is PVMEELLHFHDHTLMIVFLISTLVLYIIMAM. The Mitochondrial matrix portion of the chain corresponds to 46 to 59; sequence VSTKLTNKYILDSQ. The chain crosses the membrane as a helical span at residues 60–87; sequence EIEIVWTILPAVILIMIALPSLRILYLM. Topologically, residues 88–230 are mitochondrial intermembrane; that stretch reads DEINDPHLTI…SWSSLMLEEA (143 aa). Residues His161, Cys196, Glu198, Cys200, His204, and Met207 each coordinate Cu cation. Residue Glu198 coordinates Mg(2+).

This sequence belongs to the cytochrome c oxidase subunit 2 family. As to quaternary structure, component of the cytochrome c oxidase (complex IV, CIV), a multisubunit enzyme composed of 14 subunits. The complex is composed of a catalytic core of 3 subunits MT-CO1, MT-CO2 and MT-CO3, encoded in the mitochondrial DNA, and 11 supernumerary subunits COX4I, COX5A, COX5B, COX6A, COX6B, COX6C, COX7A, COX7B, COX7C, COX8 and NDUFA4, which are encoded in the nuclear genome. The complex exists as a monomer or a dimer and forms supercomplexes (SCs) in the inner mitochondrial membrane with NADH-ubiquinone oxidoreductase (complex I, CI) and ubiquinol-cytochrome c oxidoreductase (cytochrome b-c1 complex, complex III, CIII), resulting in different assemblies (supercomplex SCI(1)III(2)IV(1) and megacomplex MCI(2)III(2)IV(2)). Found in a complex with TMEM177, COA6, COX18, COX20, SCO1 and SCO2. Interacts with TMEM177 in a COX20-dependent manner. Interacts with COX20. Interacts with COX16. Cu cation serves as cofactor.

The protein resides in the mitochondrion inner membrane. It carries out the reaction 4 Fe(II)-[cytochrome c] + O2 + 8 H(+)(in) = 4 Fe(III)-[cytochrome c] + 2 H2O + 4 H(+)(out). Functionally, component of the cytochrome c oxidase, the last enzyme in the mitochondrial electron transport chain which drives oxidative phosphorylation. The respiratory chain contains 3 multisubunit complexes succinate dehydrogenase (complex II, CII), ubiquinol-cytochrome c oxidoreductase (cytochrome b-c1 complex, complex III, CIII) and cytochrome c oxidase (complex IV, CIV), that cooperate to transfer electrons derived from NADH and succinate to molecular oxygen, creating an electrochemical gradient over the inner membrane that drives transmembrane transport and the ATP synthase. Cytochrome c oxidase is the component of the respiratory chain that catalyzes the reduction of oxygen to water. Electrons originating from reduced cytochrome c in the intermembrane space (IMS) are transferred via the dinuclear copper A center (CU(A)) of subunit 2 and heme A of subunit 1 to the active site in subunit 1, a binuclear center (BNC) formed by heme A3 and copper B (CU(B)). The BNC reduces molecular oxygen to 2 water molecules using 4 electrons from cytochrome c in the IMS and 4 protons from the mitochondrial matrix. The sequence is that of Cytochrome c oxidase subunit 2 (MT-CO2) from Squalus acanthias (Spiny dogfish).